Reading from the N-terminus, the 304-residue chain is Probable cobalamin biosynthesis protein CobD (304 aa).

A run of 5 helical transmembrane segments spans residues 2 to 22 (IVVLIGALSIDIIFGEPKEYI), 50 to 70 (ILFSIAVIVLTAIPYFLAVYL), 73 to 93 (FILVVYVVVSMVILKTTFSIT), 147 to 167 (VDGYITPLFFFVFFGLPGAFI), and 284 to 304 (AAYSYIVIFVLPLLVIMAVFL).

This sequence belongs to the CobD/CbiB family.

Its subcellular location is the cell membrane. The protein operates within cofactor biosynthesis; adenosylcobalamin biosynthesis. Functionally, converts cobyric acid to cobinamide by the addition of aminopropanol on the F carboxylic group. The polypeptide is Probable cobalamin biosynthesis protein CobD (Thermoplasma volcanium (strain ATCC 51530 / DSM 4299 / JCM 9571 / NBRC 15438 / GSS1)).